The primary structure comprises 474 residues: tRNA-2-methylthio-N(6)-dimethylallyladenosine synthase (474 aa).

One can recognise an MTTase N-terminal domain in the interval 3–120 (KKLHIKTWGC…LPEMINSVRG (118 aa)). [4Fe-4S] cluster contacts are provided by cysteine 12, cysteine 49, cysteine 83, cysteine 157, cysteine 161, and cysteine 164. The 233-residue stretch at 143–375 (RAEGPTAFVS…QERINQQAMA (233 aa)) folds into the Radical SAM core domain. The TRAM domain occupies 378–441 (RRMLGTTQRI…PNSLRGKVVR (64 aa)).

The protein belongs to the methylthiotransferase family. MiaB subfamily. In terms of assembly, monomer. [4Fe-4S] cluster serves as cofactor.

The protein resides in the cytoplasm. The catalysed reaction is N(6)-dimethylallyladenosine(37) in tRNA + (sulfur carrier)-SH + AH2 + 2 S-adenosyl-L-methionine = 2-methylsulfanyl-N(6)-dimethylallyladenosine(37) in tRNA + (sulfur carrier)-H + 5'-deoxyadenosine + L-methionine + A + S-adenosyl-L-homocysteine + 2 H(+). Catalyzes the methylthiolation of N6-(dimethylallyl)adenosine (i(6)A), leading to the formation of 2-methylthio-N6-(dimethylallyl)adenosine (ms(2)i(6)A) at position 37 in tRNAs that read codons beginning with uridine. In Escherichia coli O81 (strain ED1a), this protein is tRNA-2-methylthio-N(6)-dimethylallyladenosine synthase.